The following is a 177-amino-acid chain: Large ribosomal subunit protein uL6 (177 aa).

It belongs to the universal ribosomal protein uL6 family. Part of the 50S ribosomal subunit.

This protein binds to the 23S rRNA, and is important in its secondary structure. It is located near the subunit interface in the base of the L7/L12 stalk, and near the tRNA binding site of the peptidyltransferase center. The polypeptide is Large ribosomal subunit protein uL6 (Methanococcoides burtonii (strain DSM 6242 / NBRC 107633 / OCM 468 / ACE-M)).